Reading from the N-terminus, the 132-residue chain is Large-conductance mechanosensitive channel (132 aa).

3 consecutive transmembrane segments (helical) span residues 14 to 34, 38 to 58, and 67 to 87; these read VVDL…VSSL, IITP…LHFG, and GNFI…FMFV.

Belongs to the MscL family. As to quaternary structure, homopentamer.

It localises to the cell membrane. Its function is as follows. Channel that opens in response to stretch forces in the membrane lipid bilayer. May participate in the regulation of osmotic pressure changes within the cell. The chain is Large-conductance mechanosensitive channel from Bacillus cereus (strain B4264).